The sequence spans 600 residues: Glutamine--fructose-6-phosphate aminotransferase [isomerizing] (600 aa).

The active-site Nucleophile; for GATase activity is Cys-2. A Glutamine amidotransferase type-2 domain is found at 2–217; sequence CGIVGFIGEQ…DKEIVIVMKE (216 aa). 2 SIS domains span residues 283 to 422 and 452 to 590; these read IRNA…AKGE and LAKQ…VDKP. Lys-595 (for Fru-6P isomerization activity) is an active-site residue.

As to quaternary structure, homodimer.

The protein localises to the cytoplasm. It carries out the reaction D-fructose 6-phosphate + L-glutamine = D-glucosamine 6-phosphate + L-glutamate. Functionally, catalyzes the first step in hexosamine metabolism, converting fructose-6P into glucosamine-6P using glutamine as a nitrogen source. This chain is Glutamine--fructose-6-phosphate aminotransferase [isomerizing], found in Bacillus anthracis.